We begin with the raw amino-acid sequence, 109 residues long: Oncomodulin (109 aa).

Residue Ser2 is modified to N-acetylserine. 2 consecutive EF-hand domains span residues 39 to 74 (MSASQVKDVFRFIDNDQSGYLDEEELKFFLQKFESG) and 78 to 109 (LTESETKSLMAAADNDGDGKIGADEFQEMVHS). Ca(2+) contacts are provided by Asp52, Asp54, Ser56, Tyr58, Glu63, Asp91, Asp93, Asp95, Lys97, and Glu102.

The protein belongs to the parvalbumin family. Abundant in the organ of Corti.

In terms of biological role, has some calmodulin-like activity with respect to enzyme activation and growth regulation. Binds two calcium ions. This is Oncomodulin (OCM) from Cavia porcellus (Guinea pig).